Here is a 131-residue protein sequence, read N- to C-terminus: Small ribosomal subunit protein uS11 (131 aa).

It belongs to the universal ribosomal protein uS11 family. In terms of assembly, part of the 30S ribosomal subunit. Interacts with proteins S7 and S18. Binds to IF-3.

Located on the platform of the 30S subunit, it bridges several disparate RNA helices of the 16S rRNA. Forms part of the Shine-Dalgarno cleft in the 70S ribosome. The protein is Small ribosomal subunit protein uS11 of Dictyoglomus turgidum (strain DSM 6724 / Z-1310).